We begin with the raw amino-acid sequence, 628 residues long: Hemocyanin II (628 aa).

Residue Thr-1 is modified to Blocked amino end (Thr); partial. Residues His-173, His-177, His-204, His-324, His-328, and His-364 each contribute to the Cu cation site. The N-linked (GlcNAc...) asparagine glycan is linked to Asn-449. Disulfide bonds link Cys-534/Cys-576 and Cys-536/Cys-583.

The protein belongs to the tyrosinase family. Hemocyanin subfamily. Hexamer or a multiple thereof. As to expression, hemolymph.

It localises to the secreted. The protein localises to the extracellular space. Hemocyanins are copper-containing oxygen carriers occurring freely dissolved in the hemolymph of many mollusks and arthropods. In Limulus polyphemus (Atlantic horseshoe crab), this protein is Hemocyanin II.